A 162-amino-acid polypeptide reads, in one-letter code: Shikimate kinase (162 aa).

An ATP-binding site is contributed by 11–16 (GSGKSS). Residue serine 15 participates in Mg(2+) binding. Substrate contacts are provided by aspartate 33, arginine 57, and glycine 80. Arginine 116 is a binding site for ATP. Position 132 (arginine 132) interacts with substrate.

This sequence belongs to the shikimate kinase family. As to quaternary structure, monomer. The cofactor is Mg(2+).

It is found in the cytoplasm. It carries out the reaction shikimate + ATP = 3-phosphoshikimate + ADP + H(+). Its pathway is metabolic intermediate biosynthesis; chorismate biosynthesis; chorismate from D-erythrose 4-phosphate and phosphoenolpyruvate: step 5/7. In terms of biological role, catalyzes the specific phosphorylation of the 3-hydroxyl group of shikimic acid using ATP as a cosubstrate. The protein is Shikimate kinase of Helicobacter pylori (strain HPAG1).